We begin with the raw amino-acid sequence, 778 residues long: MNKKILETLEFDKVKALFEPHLLTEQGLEQLRQLAPTAKADKIKQAFAEMKEMQALFVEQPHFTILSTKEIAGVCKRLEMGADLNIEEFLLLKRVLLTSRELQSFYANLENVSLEELALWFEKLHDFPQLQGNLQAFNDAGFIENFASEELARIRRKIHDSESQVRDVLQDLLKQKAQMLTEGIVASRNGRQVLPVKNTYRNKIAGVVHDISASGNTVYIEPREVVKLSEEIASLRADERYEMLRILQEISERVRPHAAEIANDAWIIGHLDLIRAKVRFIQERQAVVPQLSENQEIQLLHVCHPLVKNAVANDVYFGQDLTAIVITGPNTGGKTIMLKTLGLTQVMAQSGLPILADKGSRVGIFEEIFADIGDEQSIEQSLSTFSSHMTNIVDILGKVNQHSLLLLDELGAGTDPQEGAALAMAILEDLRLRQIKTMATTHYPELKAYGIETAFVQNASMEFDTATLRPTYRFMQGVPGRSNAFEIAKRLGLSEVIVGDASQQIDQDNDVNRIIEQLEEQTLESRKRLDNIREVEQENLKMNRALKKLYNELNREKETELNKAREQAAEIVDMALSESDQILKNLHSKSQLKPHEIIEAKAKLKKLAPEKVDLSKNKVLQKAKKKRAPKVGDDIVVLSYGQRGTLTSQLKDGRWEAQVGLIKMTLEEKEFDLVQAQQEKPVKKKQVNVVKRTSGRGPQARLDLRGKRYEEAMNELDTFIDQALLNNMAQVDIIHGIGTGVIREGVTKYLQRNKHVKSFGYAPQNAGGSGATIVTFKG.

328–335 contributes to the ATP binding site; it reads GPNTGGKT. The Smr domain maps to 702–777; it reads LDLRGKRYEE…GSGATIVTFK (76 aa).

This sequence belongs to the DNA mismatch repair MutS family. MutS2 subfamily. As to quaternary structure, homodimer. Binds to stalled ribosomes, contacting rRNA.

Its function is as follows. Endonuclease that is involved in the suppression of homologous recombination and thus may have a key role in the control of bacterial genetic diversity. Functionally, acts as a ribosome collision sensor, splitting the ribosome into its 2 subunits. Detects stalled/collided 70S ribosomes which it binds and splits by an ATP-hydrolysis driven conformational change. Acts upstream of the ribosome quality control system (RQC), a ribosome-associated complex that mediates the extraction of incompletely synthesized nascent chains from stalled ribosomes and their subsequent degradation. Probably generates substrates for RQC. This Streptococcus pneumoniae (strain CGSP14) protein is Endonuclease MutS2.